The sequence spans 639 residues: MGNSLACFCCGGGAGGRGGRHVAPAALPSDPAYDEGLGHSFCYVRPDKFVVPFSADDLVADAKAAAAAEGEATTFRAISGAALSANVSTPLSTSVLLLMPEESSASATASSGFESSESFAAVPLQPVPRFSSGPISAPFSGGFMSGPLERGFQSGPLDAALLSGPLPGTATSGRMGGAVPALRRSLSHGGRRLRNFTRALLARTEKFQDSADLGSPDAAAAAVAACGGDPCGLQWAQGKAGEDRVHVVVSEERGWVFVGIYDGFNGPDATDFLVSNLYAAVHRELRGLLWDQREQNVQHDQRPDQPGSAPSTTASDNQDQWGRRRRTRRSRPPRGADDDQRRWKCEWEQERDCSNLKPPTQQRLRCNSENDHVAVLKALTRALHRTEEAYLDIADKMVGEFPELALMGSCVLAMLMKGEDMYIMNVGDSRAVLATMDSVDLEQISQGSFDGSVGDCPPCLSAVQLTSDHSTSVEEEVIRIRNEHPDDPSAISKDRVKGSLKVTRAFGAGFLKQPKWNDALLEMFRIDYVGSSPYISCNPSLFHHKLSTRDRFLILSSDGLYQYFTNEEAVAQVEMFIATTPEGDPAQHLVEEVLFRAANKAGMDFHELIEIPHGDRRRYHDDVSVIVISLEGRIWRSCV.

One can recognise a PPM-type phosphatase domain in the interval 227 to 630 (GGDPCGLQWA…DDVSVIVISL (404 aa)). Mn(2+) is bound by residues Asp262 and Gly263. The tract at residues 295-341 (QNVQHDQRPDQPGSAPSTTASDNQDQWGRRRRTRRSRPPRGADDDQR) is disordered. Positions 308–320 (SAPSTTASDNQDQ) are enriched in polar residues. Residues 323–332 (RRRRTRRSRP) are compositionally biased toward basic residues. Mn(2+)-binding residues include Asp558 and Asp621.

This sequence belongs to the PP2C family. In terms of assembly, interacts with XA21 (via juxtamembrane and kinase domains). The cofactor is Mg(2+). It depends on Mn(2+) as a cofactor.

It is found in the cell membrane. It carries out the reaction O-phospho-L-seryl-[protein] + H2O = L-seryl-[protein] + phosphate. It catalyses the reaction O-phospho-L-threonyl-[protein] + H2O = L-threonyl-[protein] + phosphate. Its function is as follows. Protein phosphatase that acts on XA21 pathogen recognition receptor. Negatively regulates cell death and XA21-mediated innate immunity. The sequence is that of Protein phosphatase 2C 35 (XB15) from Oryza sativa subsp. japonica (Rice).